Here is a 196-residue protein sequence, read N- to C-terminus: Alpha-crystallin A chain (196 aa).

Residue Met-1 is modified to N-acetylmethionine. Positions 1–63 (MDVTIQHPWF…RTVLDSCISE (63 aa)) are required for complex formation with BFSP1 and BFSP2. Residue Gln-6 is modified to Deamidated glutamine; partial. At Ser-45 the chain carries Phosphoserine. Gln-50 is modified (deamidated glutamine; partial). One can recognise a sHSP domain in the interval 76–185 (HAGNPENNPI…GHSERAIPVS (110 aa)). Lys-93 and Lys-122 each carry N6-acetyllysine. His-123 contacts Zn(2+). A Deamidated asparagine; partial modification is found at Asn-124. The Zn(2+) site is built by Glu-125 and His-130. Phosphoserine is present on Ser-145. Gln-170 carries the post-translational modification Deamidated glutamine; partial. A disordered region spans residues 170–196 (QSGLDAGHSERAIPVSQEEKPSSAPLF). The segment covering 176 to 190 (GHSERAIPVSQEEKP) has biased composition (basic and acidic residues). Position 177 (His-177) interacts with Zn(2+). Ser-185 carries O-linked (GlcNAc) serine glycosylation.

It belongs to the small heat shock protein (HSP20) family. In terms of assembly, heteromer composed of three CRYAA and one CRYAB subunits. Inter-subunit bridging via zinc ions enhances stability, which is crucial as there is no protein turn over in the lens. Can also form homodimers and homotetramers (dimers of dimers) which serve as the building blocks of homooligomers. Within homooligomers, the zinc-binding motif is created from residues of 3 different molecules. His-123 and Glu-125 from one molecule are ligands of the zinc ion, and His-130 and His-177 residues from additional molecules complete the site with tetrahedral coordination geometry. Part of a complex required for lens intermediate filament formation composed of BFSP1, BFSP2 and CRYAA. Post-translationally, acetylation at Lys-93 may increase chaperone activity. In terms of processing, undergoes age-dependent proteolytical cleavage at the C-terminus.

The protein resides in the cytoplasm. Its subcellular location is the nucleus. Functionally, contributes to the transparency and refractive index of the lens. Acts as a chaperone, preventing aggregation of various proteins under a wide range of stress conditions. Required for the correct formation of lens intermediate filaments as part of a complex composed of BFSP1, BFSP2 and CRYAA. The chain is Alpha-crystallin A chain (CRYAA) from Spalax ehrenbergi (Middle East blind mole rat).